The following is a 457-amino-acid chain: UDP-N-acetylmuramate--L-alanine ligase (457 aa).

Gly-109–Thr-115 contacts ATP.

Belongs to the MurCDEF family.

Its subcellular location is the cytoplasm. It carries out the reaction UDP-N-acetyl-alpha-D-muramate + L-alanine + ATP = UDP-N-acetyl-alpha-D-muramoyl-L-alanine + ADP + phosphate + H(+). It functions in the pathway cell wall biogenesis; peptidoglycan biosynthesis. Functionally, cell wall formation. This chain is UDP-N-acetylmuramate--L-alanine ligase, found in Thermotoga petrophila (strain ATCC BAA-488 / DSM 13995 / JCM 10881 / RKU-1).